Here is a 404-residue protein sequence, read N- to C-terminus: Argininosuccinate synthase (404 aa).

9 to 17 (AYSGGLDTS) is a binding site for ATP. Y86 is a binding site for L-citrulline. Residue G116 participates in ATP binding. Residues T118, N122, and D123 each contribute to the L-aspartate site. N122 contacts L-citrulline. L-citrulline contacts are provided by R126, S174, S183, E259, and Y271.

The protein belongs to the argininosuccinate synthase family. Type 1 subfamily. As to quaternary structure, homotetramer.

It localises to the cytoplasm. The enzyme catalyses L-citrulline + L-aspartate + ATP = 2-(N(omega)-L-arginino)succinate + AMP + diphosphate + H(+). Its pathway is amino-acid biosynthesis; L-arginine biosynthesis; L-arginine from L-ornithine and carbamoyl phosphate: step 2/3. This Listeria welshimeri serovar 6b (strain ATCC 35897 / DSM 20650 / CCUG 15529 / CIP 8149 / NCTC 11857 / SLCC 5334 / V8) protein is Argininosuccinate synthase.